A 417-amino-acid chain; its full sequence is Phosphoglycerate kinase 1 (417 aa).

Serine 2 carries the post-translational modification N-acetylserine. 2 positions are modified to phosphoserine: serine 2 and serine 4. Lysine 6 is modified (N6-succinyllysine). Lysine 11 is subject to N6-acetyllysine. Positions 23, 24, 25, 26, 38, 39, 62, 63, 65, and 66 each coordinate (2R)-3-phosphoglycerate. Positions 38-43 (QRIKAA) are mitochondrial targeting region exposed following cis-trans isomerization by PIN1 and recognized by the TOM complex for mitochondrial translocation of the protein. Residue lysine 75 is modified to N6-acetyllysine. A Phosphotyrosine modification is found at tyrosine 76. N6-acetyllysine is present on residues lysine 86 and lysine 91. Lysine 97 carries the N6-(2-hydroxyisobutyryl)lysine; alternate modification. Lysine 97 bears the N6-acetyllysine; alternate mark. The (2R)-3-phosphoglycerate site is built by leucine 122 and arginine 123. The residue at position 131 (lysine 131) is an N6-acetyllysine; alternate. At lysine 131 the chain carries N6-malonyllysine; alternate. An N6-acetyllysine modification is found at lysine 146. (2R)-3-phosphoglycerate contacts are provided by histidine 170 and arginine 171. Lysine 191 carries the N6-succinyllysine modification. Tyrosine 196 bears the Phosphotyrosine mark. Position 199 is an N6-acetyllysine (lysine 199). At serine 203 the chain carries Phosphoserine. Glycine 214 serves as a coordination point for ADP. Position 214 (glycine 214) interacts with CDP. Positions 215 and 216 each coordinate AMP. Residue alanine 215 coordinates ATP. Alanine 215 is a Mg(2+) binding site. Lysine 216 is subject to N6-(2-hydroxyisobutyryl)lysine. Positions 218 and 219 each coordinate Mg(2+). Position 219 (aspartate 219) interacts with CDP. Lysine 220 contacts AMP. Lysine 220 provides a ligand contact to ATP. Lysine 220 is subject to N6-(2-hydroxyisobutyryl)lysine. Glycine 238 serves as a coordination point for ADP. Glycine 238 contributes to the CDP binding site. Residue glycine 239 participates in AMP binding. Glycine 239 lines the ATP pocket. Lysine 267 and lysine 291 each carry N6-acetyllysine. Glycine 313 provides a ligand contact to AMP. Residue glycine 313 participates in ATP binding. Position 323 is an N6-(2-hydroxyisobutyryl)lysine (lysine 323). Glycine 338, valine 340, and phenylalanine 343 together coordinate CDP. Phenylalanine 343 is a binding site for ADP. Glutamate 344 contacts AMP. 3 residues coordinate ATP: glutamate 344, aspartate 375, and threonine 376. Aspartate 375 contacts Mg(2+).

The protein belongs to the phosphoglycerate kinase family. In terms of assembly, monomer. Interacts with kinase MAPK1/ERK2; the interaction is direct, occurs under hypoxic conditions, and promotes its interaction with PIN1. Interacts with peptidyl-prolyl cis-trans isomerase PIN1; the interaction is direct, occurs under hypoxic conditions, and targets the protein to the mitochondrion by promoting interactions with the TOM complex. Interacts with mitochondrial circRNA mcPGK1 (via its 2nd stem-loop); the interaction is direct and targets the protein to the mitochondrion by promoting interactions with the TOM complex. Interacts with pyruvate dehydrogenase kinase PDK1; the interaction is direct, occurs under hypoxic conditions and leads to PDK1-mediated inhibition of pyruvate dehydrogenase complex activity. Mg(2+) is required as a cofactor. Post-translationally, phosphorylated at Ser-203 by MAPK1/ERK2 under hypoxic conditions, which promotes its mitochondrial targeting.

The protein resides in the cytoplasm. It localises to the cytosol. The protein localises to the mitochondrion matrix. It catalyses the reaction (2R)-3-phosphoglycerate + ATP = (2R)-3-phospho-glyceroyl phosphate + ADP. The catalysed reaction is L-seryl-[protein] + ATP = O-phospho-L-seryl-[protein] + ADP + H(+). It functions in the pathway carbohydrate degradation; glycolysis; pyruvate from D-glyceraldehyde 3-phosphate: step 2/5. Functionally, catalyzes one of the two ATP producing reactions in the glycolytic pathway via the reversible conversion of 1,3-diphosphoglycerate to 3-phosphoglycerate. Both L- and D- forms of purine and pyrimidine nucleotides can be used as substrates, but the activity is much lower on pyrimidines. In addition to its role as a glycolytic enzyme, it seems that PGK-1 acts as a polymerase alpha cofactor protein (primer recognition protein). Acts as a protein kinase when localized to the mitochondrion where it phosphorylates pyruvate dehydrogenase kinase PDK1 to inhibit pyruvate dehydrogenase complex activity and suppress the formation of acetyl-coenzyme A from pyruvate, and consequently inhibit oxidative phosphorylation and promote glycolysis. May play a role in sperm motility. In Notamacropus eugenii (Tammar wallaby), this protein is Phosphoglycerate kinase 1 (PGK1).